The following is a 271-amino-acid chain: 4-hydroxy-tetrahydrodipicolinate reductase (271 aa).

Residues 10 to 15 (GAGGRM), glutamate 36, 100 to 102 (GTT), and 124 to 127 (SGNM) contribute to the NAD(+) site. Histidine 157 functions as the Proton donor/acceptor in the catalytic mechanism. Histidine 158 serves as a coordination point for (S)-2,3,4,5-tetrahydrodipicolinate. The active-site Proton donor is lysine 161. 167-168 (GT) contributes to the (S)-2,3,4,5-tetrahydrodipicolinate binding site.

Belongs to the DapB family.

The protein resides in the cytoplasm. The enzyme catalyses (S)-2,3,4,5-tetrahydrodipicolinate + NAD(+) + H2O = (2S,4S)-4-hydroxy-2,3,4,5-tetrahydrodipicolinate + NADH + H(+). The catalysed reaction is (S)-2,3,4,5-tetrahydrodipicolinate + NADP(+) + H2O = (2S,4S)-4-hydroxy-2,3,4,5-tetrahydrodipicolinate + NADPH + H(+). Its pathway is amino-acid biosynthesis; L-lysine biosynthesis via DAP pathway; (S)-tetrahydrodipicolinate from L-aspartate: step 4/4. In terms of biological role, catalyzes the conversion of 4-hydroxy-tetrahydrodipicolinate (HTPA) to tetrahydrodipicolinate. This Rhodopseudomonas palustris (strain BisB5) protein is 4-hydroxy-tetrahydrodipicolinate reductase.